A 113-amino-acid chain; its full sequence is UPF0102 protein SUN_0231 (113 aa).

Belongs to the UPF0102 family.

The polypeptide is UPF0102 protein SUN_0231 (Sulfurovum sp. (strain NBC37-1)).